A 330-amino-acid polypeptide reads, in one-letter code: Probable xanthine dehydrogenase subunit A (330 aa).

In terms of assembly, could be composed of four subunits: PucA, PucC, PucD and PucE.

The enzyme catalyses xanthine + NAD(+) + H2O = urate + NADH + H(+). The catalysed reaction is hypoxanthine + NAD(+) + H2O = xanthine + NADH + H(+). It participates in purine metabolism; hypoxanthine degradation; urate from hypoxanthine: step 1/2. Its pathway is purine metabolism; hypoxanthine degradation; urate from hypoxanthine: step 2/2. In terms of biological role, oxidizes hypoxanthine and xanthine to uric acid. PucA subunit could exert a molybdenum cofactor recruiting function. The chain is Probable xanthine dehydrogenase subunit A (pucA) from Bacillus subtilis (strain 168).